The chain runs to 545 residues: CTP synthase (545 aa).

The interval 1-266 is amidoligase domain; that stretch reads MKTNYIFVTG…DDYICKRFSL (266 aa). Ser-14 is a binding site for CTP. Residue Ser-14 participates in UTP binding. ATP is bound by residues 15-20 and Asp-72; that span reads SLGKGI. Mg(2+) is bound by residues Asp-72 and Glu-140. Residues 147 to 149, 187 to 192, and Lys-223 contribute to the CTP site; these read DIE and KTKPTQ. UTP contacts are provided by residues 187–192 and Lys-223; that span reads KTKPTQ. ATP is bound at residue 239–241; sequence KDV. Positions 291–542 constitute a Glutamine amidotransferase type-1 domain; sequence TIGMVGKYVE…VKAAGKYQKG (252 aa). Gly-352 provides a ligand contact to L-glutamine. The active-site Nucleophile; for glutamine hydrolysis is Cys-379. Residues 380-383, Glu-403, and Arg-470 each bind L-glutamine; that span reads LGMQ. Active-site residues include His-515 and Glu-517.

Belongs to the CTP synthase family. Homotetramer.

The catalysed reaction is UTP + L-glutamine + ATP + H2O = CTP + L-glutamate + ADP + phosphate + 2 H(+). It carries out the reaction L-glutamine + H2O = L-glutamate + NH4(+). It catalyses the reaction UTP + NH4(+) + ATP = CTP + ADP + phosphate + 2 H(+). It participates in pyrimidine metabolism; CTP biosynthesis via de novo pathway; CTP from UDP: step 2/2. Allosterically activated by GTP, when glutamine is the substrate; GTP has no effect on the reaction when ammonia is the substrate. The allosteric effector GTP functions by stabilizing the protein conformation that binds the tetrahedral intermediate(s) formed during glutamine hydrolysis. Inhibited by the product CTP, via allosteric rather than competitive inhibition. Its function is as follows. Catalyzes the ATP-dependent amination of UTP to CTP with either L-glutamine or ammonia as the source of nitrogen. Regulates intracellular CTP levels through interactions with the four ribonucleotide triphosphates. The polypeptide is CTP synthase (Photorhabdus laumondii subsp. laumondii (strain DSM 15139 / CIP 105565 / TT01) (Photorhabdus luminescens subsp. laumondii)).